The sequence spans 187 residues: Ras-like protein rasD (187 aa).

GTP is bound at residue 10-17; that stretch reads GGGGVGKS. An Effector region motif is present at residues 32–40; the sequence is YDPTIEDSY. GTP-binding positions include 57-61 and 116-119; these read DTAGQ and NKAD. Cys-184 carries the post-translational modification Cysteine methyl ester. The S-geranylgeranyl cysteine moiety is linked to residue Cys-184. Residues 185–187 constitute a propeptide, removed in mature form; sequence LIL.

Belongs to the small GTPase superfamily. Ras family.

It localises to the cell membrane. It carries out the reaction GTP + H2O = GDP + phosphate + H(+). Its activity is regulated as follows. Alternates between an inactive form bound to GDP and an active form bound to GTP. Activated by a guanine nucleotide-exchange factor (GEF) and inactivated by a GTPase-activating protein (GAP). In terms of biological role, ras proteins bind GDP/GTP and possess intrinsic GTPase activity. The protein is Ras-like protein rasD (rasD) of Dictyostelium discoideum (Social amoeba).